The chain runs to 327 residues: Tetraacyldisaccharide 4'-kinase (327 aa).

An ATP-binding site is contributed by 52-59; that stretch reads TLGGAGKT.

This sequence belongs to the LpxK family.

It carries out the reaction a lipid A disaccharide + ATP = a lipid IVA + ADP + H(+). Its pathway is glycolipid biosynthesis; lipid IV(A) biosynthesis; lipid IV(A) from (3R)-3-hydroxytetradecanoyl-[acyl-carrier-protein] and UDP-N-acetyl-alpha-D-glucosamine: step 6/6. In terms of biological role, transfers the gamma-phosphate of ATP to the 4'-position of a tetraacyldisaccharide 1-phosphate intermediate (termed DS-1-P) to form tetraacyldisaccharide 1,4'-bis-phosphate (lipid IVA). The sequence is that of Tetraacyldisaccharide 4'-kinase from Methylorubrum extorquens (strain CM4 / NCIMB 13688) (Methylobacterium extorquens).